Reading from the N-terminus, the 677-residue chain is DNA ligase (677 aa).

NAD(+) contacts are provided by residues 34-38 (DLAFD), 83-84 (SL), and Glu-115. Lys-117 functions as the N6-AMP-lysine intermediate in the catalytic mechanism. 4 residues coordinate NAD(+): Arg-138, Glu-180, Lys-297, and Lys-321. Residues Cys-416, Cys-419, Cys-434, and Cys-439 each contribute to the Zn(2+) site. The BRCT domain maps to 596–677 (KKTSQLAGLT…LIKMLETEQA (82 aa)).

The protein belongs to the NAD-dependent DNA ligase family. LigA subfamily. Mg(2+) is required as a cofactor. It depends on Mn(2+) as a cofactor.

It catalyses the reaction NAD(+) + (deoxyribonucleotide)n-3'-hydroxyl + 5'-phospho-(deoxyribonucleotide)m = (deoxyribonucleotide)n+m + AMP + beta-nicotinamide D-nucleotide.. Functionally, DNA ligase that catalyzes the formation of phosphodiester linkages between 5'-phosphoryl and 3'-hydroxyl groups in double-stranded DNA using NAD as a coenzyme and as the energy source for the reaction. It is essential for DNA replication and repair of damaged DNA. The sequence is that of DNA ligase from Acidobacterium capsulatum (strain ATCC 51196 / DSM 11244 / BCRC 80197 / JCM 7670 / NBRC 15755 / NCIMB 13165 / 161).